Consider the following 293-residue polypeptide: MEHLLSMEHLSNSEIYDLITIACQFKSGERPLPQFNGQYVSNLFFENSTRTKCSFEMAEQKLGLKLINFETSTSSVKKGESLYDTCKTLESIGVDLLVIRHSQNSYYEELNQLNIPIANAGDGSGQHPTQSLLDIMTIYEEYGSFEGLNILICGDIKNSRVARSNYHSLTSLGANVMFSSPKEWVDNTLEAPYVEIDEVIDKVDIVMLLRVQHERHGISGEANFAAEEYHQQFGLTQARYDKLKEEAIVMHPAPVNRGVEIKSELVEAPKSRIFKQMENGMYLRMAVISALLQ.

Carbamoyl phosphate-binding residues include arginine 50 and threonine 51. Position 78 (lysine 78) interacts with L-aspartate. Residues arginine 100, histidine 127, and glutamine 130 each coordinate carbamoyl phosphate. L-aspartate is bound by residues arginine 160 and arginine 210. Residues alanine 253 and proline 254 each coordinate carbamoyl phosphate.

This sequence belongs to the aspartate/ornithine carbamoyltransferase superfamily. ATCase family. As to quaternary structure, heterododecamer (2C3:3R2) of six catalytic PyrB chains organized as two trimers (C3), and six regulatory PyrI chains organized as three dimers (R2).

It carries out the reaction carbamoyl phosphate + L-aspartate = N-carbamoyl-L-aspartate + phosphate + H(+). The protein operates within pyrimidine metabolism; UMP biosynthesis via de novo pathway; (S)-dihydroorotate from bicarbonate: step 2/3. Catalyzes the condensation of carbamoyl phosphate and aspartate to form carbamoyl aspartate and inorganic phosphate, the committed step in the de novo pyrimidine nucleotide biosynthesis pathway. This is Aspartate carbamoyltransferase catalytic subunit from Staphylococcus epidermidis (strain ATCC 35984 / DSM 28319 / BCRC 17069 / CCUG 31568 / BM 3577 / RP62A).